A 36-amino-acid chain; its full sequence is Mu/kappa-theraphotoxin-Ap1a (36 aa).

3 cysteine pairs are disulfide-bonded: C3-C18, C10-C23, and C17-C30. Residue F36 is modified to Phenylalanine amide.

This sequence belongs to the neurotoxin 10 (Hwtx-1) family. In terms of tissue distribution, expressed by the venom gland.

The protein resides in the secreted. In terms of biological role, inhibitor of voltage-gated potassium and sodium channels. Among other potassium channels, it selectively inhibits Kv10.1/KCNH1/EAG1 (IC(50)=236 nM) by shifting the voltage dependence of channel activation in a depolarising direction, it shows a maximum inhibition of 80% at saturating concentrations, it shows fast on-rates, and is poorly reversible. It also slightly affects channel inactivation, when the membrane is highly depolarised (&gt;+80 mV). It shows similar potency on Nav1.7/SCN9A (IC(50)=222 nM) and lower potency on Nav1.2/SCN2A (IC(50)=519 nM). The sequence is that of Mu/kappa-theraphotoxin-Ap1a from Avicularia purpurea (Ecuadorian purple pinktoe tarantula).